The following is a 244-amino-acid chain: ATP synthase subunit a, chloroplastic (244 aa).

The next 5 helical transmembrane spans lie at 35 to 55, 92 to 112, 131 to 151, 196 to 216, and 217 to 237; these read QVLITSWVVIAILLGSAVIAV, VPFIGTMFLFIFVSNWSGALL, INTTVALALLTSVAYFYAGLS, LVVVVLVSLVPSVVPIPVMFL, and GLFISGIQALIFATLAAAYIG.

It belongs to the ATPase A chain family. F-type ATPases have 2 components, CF(1) - the catalytic core - and CF(0) - the membrane proton channel. CF(1) has five subunits: alpha(3), beta(3), gamma(1), delta(1), epsilon(1). CF(0) has four main subunits: a, b, b' and c.

The protein localises to the plastid. It localises to the chloroplast thylakoid membrane. Its function is as follows. Key component of the proton channel; it plays a direct role in the translocation of protons across the membrane. The protein is ATP synthase subunit a, chloroplastic of Gossypium barbadense (Sea Island cotton).